Consider the following 82-residue polypeptide: ATP synthase subunit c (82 aa).

The next 2 membrane-spanning stretches (helical) occupy residues 6–26 and 57–77; these read AAAS…GPGI and LAFM…LLFA.

This sequence belongs to the ATPase C chain family. F-type ATPases have 2 components, F(1) - the catalytic core - and F(0) - the membrane proton channel. F(1) has five subunits: alpha(3), beta(3), gamma(1), delta(1), epsilon(1). F(0) has four main subunits: a(1), b(1), b'(1) and c(10-14). The alpha and beta chains form an alternating ring which encloses part of the gamma chain. F(1) is attached to F(0) by a central stalk formed by the gamma and epsilon chains, while a peripheral stalk is formed by the delta, b and b' chains.

It is found in the cell inner membrane. F(1)F(0) ATP synthase produces ATP from ADP in the presence of a proton or sodium gradient. F-type ATPases consist of two structural domains, F(1) containing the extramembraneous catalytic core and F(0) containing the membrane proton channel, linked together by a central stalk and a peripheral stalk. During catalysis, ATP synthesis in the catalytic domain of F(1) is coupled via a rotary mechanism of the central stalk subunits to proton translocation. Its function is as follows. Key component of the F(0) channel; it plays a direct role in translocation across the membrane. A homomeric c-ring of between 10-14 subunits forms the central stalk rotor element with the F(1) delta and epsilon subunits. In Gloeobacter violaceus (strain ATCC 29082 / PCC 7421), this protein is ATP synthase subunit c.